Reading from the N-terminus, the 178-residue chain is Ribulose bisphosphate carboxylase small subunit, chloroplastic (178 aa).

The N-terminal 55 residues, 1-55 (MASSMMVSTAAVSRTSPAQSNMVVPFAGLHSSAAFPVTRKFADSSKLPSNGLRVR), are a transit peptide targeting the chloroplast.

It belongs to the RuBisCO small chain family. In terms of assembly, heterohexadecamer of 8 large and 8 small subunits.

The protein resides in the plastid. It localises to the chloroplast. Its function is as follows. RuBisCO catalyzes two reactions: the carboxylation of D-ribulose 1,5-bisphosphate, the primary event in carbon dioxide fixation, as well as the oxidative fragmentation of the pentose substrate. Both reactions occur simultaneously and in competition at the same active site. Although the small subunit is not catalytic it is essential for maximal activity. The sequence is that of Ribulose bisphosphate carboxylase small subunit, chloroplastic from Zantedeschia aethiopica (White calla lily).